The chain runs to 339 residues: N-acetyl-gamma-glutamyl-phosphate reductase (339 aa).

Cysteine 145 is a catalytic residue.

Belongs to the NAGSA dehydrogenase family. Type 1 subfamily.

The protein localises to the cytoplasm. It carries out the reaction N-acetyl-L-glutamate 5-semialdehyde + phosphate + NADP(+) = N-acetyl-L-glutamyl 5-phosphate + NADPH + H(+). The protein operates within amino-acid biosynthesis; L-arginine biosynthesis; N(2)-acetyl-L-ornithine from L-glutamate: step 3/4. Functionally, catalyzes the NADPH-dependent reduction of N-acetyl-5-glutamyl phosphate to yield N-acetyl-L-glutamate 5-semialdehyde. This Thermotoga petrophila (strain ATCC BAA-488 / DSM 13995 / JCM 10881 / RKU-1) protein is N-acetyl-gamma-glutamyl-phosphate reductase.